A 258-amino-acid polypeptide reads, in one-letter code: Protein CHAPERONE-LIKE PROTEIN OF POR1, chloroplastic (258 aa).

Residues methionine 1–cysteine 48 constitute a chloroplast transit peptide. An N-acetylthreonine modification is found at threonine 49. Positions tryptophan 67 to lysine 122 are J-like domain required for holdase chaperone activity. The next 3 membrane-spanning stretches (helical) occupy residues phenylalanine 162–phenylalanine 182, leucine 207–isoleucine 227, and threonine 237–leucine 257.

This sequence belongs to the chaperone-like protein of POR1 protein family. In terms of assembly, interacts with PORB in chloroplast. Interacts with PORA during plastid import. As to expression, expressed ubiquitously with higher levels in young leaves, flowers, and the root elongation zone.

It is found in the mitochondrion membrane. The protein resides in the plastid. The protein localises to the chloroplast envelope. Its subcellular location is the chloroplast thylakoid membrane. Its function is as follows. Essential protein required during embryogenesis. Exhibits holdase chaperone activity involved in the stabilization of NADPH:protochlorophyllide oxidoreductase (POR) proteins against photooxidative stress during POR proteins import into chloroplasts. Required for chloroplast biogenesis and development. When expressed in yeast, triggers mitochondria-mediated cell death associated with the loss of mitochondrial membrane potential. In Arabidopsis thaliana (Mouse-ear cress), this protein is Protein CHAPERONE-LIKE PROTEIN OF POR1, chloroplastic.